The following is an 81-amino-acid chain: Cytochrome c oxidase subunit 7B2, mitochondrial (81 aa).

Residues Met1–Gln25 constitute a mitochondrion transit peptide. Residues Ser26 to Asp33 are Mitochondrial matrix-facing. A helical transmembrane segment spans residues Phe34 to Gln60. The Mitochondrial intermembrane segment spans residues Ile61–Gln81.

Belongs to the cytochrome c oxidase VIIb family. In terms of assembly, component of the cytochrome c oxidase (complex IV, CIV), a multisubunit enzyme composed of 14 subunits. The complex is composed of a catalytic core of 3 subunits MT-CO1, MT-CO2 and MT-CO3, encoded in the mitochondrial DNA, and 11 supernumerary subunits COX4I, COX5A, COX5B, COX6A, COX6B, COX6C, COX7A, COX7B, COX7C, COX8 and NDUFA4, which are encoded in the nuclear genome. The complex exists as a monomer or a dimer and forms supercomplexes (SCs) in the inner mitochondrial membrane with NADH-ubiquinone oxidoreductase (complex I, CI) and ubiquinol-cytochrome c oxidoreductase (cytochrome b-c1 complex, complex III, CIII), resulting in different assemblies (supercomplex SCI(1)III(2)IV(1) and megacomplex MCI(2)III(2)IV(2)).

Its subcellular location is the mitochondrion inner membrane. Its pathway is energy metabolism; oxidative phosphorylation. Functionally, component of the cytochrome c oxidase, the last enzyme in the mitochondrial electron transport chain which drives oxidative phosphorylation. The respiratory chain contains 3 multisubunit complexes succinate dehydrogenase (complex II, CII), ubiquinol-cytochrome c oxidoreductase (cytochrome b-c1 complex, complex III, CIII) and cytochrome c oxidase (complex IV, CIV), that cooperate to transfer electrons derived from NADH and succinate to molecular oxygen, creating an electrochemical gradient over the inner membrane that drives transmembrane transport and the ATP synthase. Cytochrome c oxidase is the component of the respiratory chain that catalyzes the reduction of oxygen to water. Electrons originating from reduced cytochrome c in the intermembrane space (IMS) are transferred via the dinuclear copper A center (CU(A)) of subunit 2 and heme A of subunit 1 to the active site in subunit 1, a binuclear center (BNC) formed by heme A3 and copper B (CU(B)). The BNC reduces molecular oxygen to 2 water molecules using 4 electrons from cytochrome c in the IMS and 4 protons from the mitochondrial matrix. The sequence is that of Cytochrome c oxidase subunit 7B2, mitochondrial (COX7B2) from Macaca fascicularis (Crab-eating macaque).